The following is a 339-amino-acid chain: MAETITTDVAIIGAGPAGLFAVFECGMLKLGTVLIDALGEVGGQCAALYPEKPIYDIPALPAIEAAGLIENLERQIAPFAAPRLLGRLVTAISGSSGDFTIGTDLGDIVRAKAIIIAAGAGAFGPNRPPLEGLAAYEASGAVQYYVKRREALRGKRVVIAGGGDSAVDWALALCGIASSIAVVHRRPKFRAAPESAAQLAEAAARGDIDLVIPYQLHALHGADGALRTVEVADLDGATRHLEADVLLPFFGLATDLGPVATWGLELSLHHVLVTPSTCETSTRGIFAIGDVAQYPGKLKLILQGFSEAAMAAHAIHPIVHPDEALHFEYSTSKGVPGTA.

Residues Asp36, Gln44, Tyr49, Val89, Phe123, Asp290, and Thr331 each coordinate FAD.

The protein belongs to the ferredoxin--NADP reductase type 2 family. Homodimer. Requires FAD as cofactor.

It catalyses the reaction 2 reduced [2Fe-2S]-[ferredoxin] + NADP(+) + H(+) = 2 oxidized [2Fe-2S]-[ferredoxin] + NADPH. This Acidiphilium cryptum (strain JF-5) protein is Ferredoxin--NADP reductase.